A 294-amino-acid polypeptide reads, in one-letter code: UDP-3-O-acyl-N-acetylglucosamine deacetylase (294 aa).

Residues histidine 75, histidine 232, and aspartate 236 each contribute to the Zn(2+) site. Catalysis depends on histidine 259, which acts as the Proton donor.

The protein belongs to the LpxC family. The cofactor is Zn(2+).

The enzyme catalyses a UDP-3-O-[(3R)-3-hydroxyacyl]-N-acetyl-alpha-D-glucosamine + H2O = a UDP-3-O-[(3R)-3-hydroxyacyl]-alpha-D-glucosamine + acetate. The protein operates within glycolipid biosynthesis; lipid IV(A) biosynthesis; lipid IV(A) from (3R)-3-hydroxytetradecanoyl-[acyl-carrier-protein] and UDP-N-acetyl-alpha-D-glucosamine: step 2/6. Functionally, catalyzes the hydrolysis of UDP-3-O-myristoyl-N-acetylglucosamine to form UDP-3-O-myristoylglucosamine and acetate, the committed step in lipid A biosynthesis. The chain is UDP-3-O-acyl-N-acetylglucosamine deacetylase from Campylobacter jejuni subsp. doylei (strain ATCC BAA-1458 / RM4099 / 269.97).